The sequence spans 217 residues: Ribosomal RNA large subunit methyltransferase E (217 aa).

Glycine 71, tryptophan 73, aspartate 91, aspartate 107, and aspartate 132 together coordinate S-adenosyl-L-methionine. Residue lysine 172 is the Proton acceptor of the active site.

The protein belongs to the class I-like SAM-binding methyltransferase superfamily. RNA methyltransferase RlmE family.

It is found in the cytoplasm. The enzyme catalyses uridine(2552) in 23S rRNA + S-adenosyl-L-methionine = 2'-O-methyluridine(2552) in 23S rRNA + S-adenosyl-L-homocysteine + H(+). Specifically methylates the uridine in position 2552 of 23S rRNA at the 2'-O position of the ribose in the fully assembled 50S ribosomal subunit. The polypeptide is Ribosomal RNA large subunit methyltransferase E (Psychromonas ingrahamii (strain DSM 17664 / CCUG 51855 / 37)).